The primary structure comprises 595 residues: uncharacterized protein (595 aa).

Disordered stretches follow at residues 50 to 159 (VNPS…KTKK), 398 to 430 (TYPT…PPSL), and 450 to 595 (VTEG…SLDK). A compositionally biased stretch (low complexity) spans 83 to 122 (SNKSSALKKSNKSSNKSSNKSSNKSSNKSSNKSSNKSSNK). Residues 123-132 (FPDKSDKSDS) show a composition bias toward basic and acidic residues. Residues 137–146 (DNSDDSDDSS) show a composition bias toward acidic residues. The span at 398–409 (TYPTTPLFSEPT) shows a compositional bias: low complexity. The segment covering 410–420 (IPKPPQQPTTE) has biased composition (pro residues). Over residues 421-430 (PPSGFKPPSL) the composition is skewed to low complexity. The segment covering 454–463 (KVVESDDHTS) has biased composition (basic and acidic residues). The span at 467-476 (IPPPPPPPPS) shows a compositional bias: pro residues. Residues 477–529 (ISSDNSSPNKSVKSSTKSSTKSSTKSSTKSSTKSSTKSPSKTPVKSPIKSSSK) are compositionally biased toward low complexity. Over residues 530–542 (LSDKKSPTKKIES) the composition is skewed to basic and acidic residues. Residues 544–553 (GESDSESDSE) show a composition bias toward acidic residues. Residues 559–570 (TKKSTNKIKKIT) show a composition bias toward basic residues. The segment covering 571–580 (NNKLENSNTK) has biased composition (low complexity). Residues 581 to 595 (NNKKFSKKKTISLDK) show a composition bias toward basic residues.

This is an uncharacterized protein from Acanthamoeba polyphaga mimivirus (APMV).